Here is a 316-residue protein sequence, read N- to C-terminus: Polyprenyl transferase ausN (316 aa).

The next 9 membrane-spanning stretches (helical) occupy residues 45–65, 69–89, 108–128, 129–149, 163–183, 188–208, 233–253, 256–276, and 296–316; these read VVGV…TFLL, VILS…NDLI, GAVS…CGGS, LLLL…FFAL, LILT…DMNP, IPTL…DIVY, DQIA…GGIL, LGIP…LRFL, and SCLL…CVRL.

This sequence belongs to the UbiA prenyltransferase family. Mg(2+) serves as cofactor.

The protein resides in the membrane. The enzyme catalyses 3,5-dimethylorsellinate + (2E,6E)-farnesyl diphosphate = (3R)-3-farnesyl-6-hydroxy-2,3,5-trimethyl-4-oxocyclohexa-1,5-diene-1-carboxylate + diphosphate + H(+). It functions in the pathway secondary metabolite biosynthesis; terpenoid biosynthesis. Functionally, polyprenyl transferase; part of the gene cluster A that mediates the biosynthesis of the fungal meroterpenoid acetoxydehydroaustin. The first step of the pathway is the synthesis of 3,5-dimethylorsellinic acid by the polyketide synthase ausA. 3,5-dimethylorsellinic acid is then prenylated by the polyprenyl transferase ausN. Further epoxidation by the FAD-dependent monooxygenase ausM and cyclization by the probable terpene cyclase ausL lead to the formation of protoaustinoid A. Protoaustinoid A is then oxidized to spiro-lactone preaustinoid A3 by the combined action of the FAD-binding monooxygenases ausB and ausC, and the dioxygenase ausE. Acid-catalyzed keto-rearrangement and ring contraction of the tetraketide portion of preaustinoid A3 by ausJ lead to the formation of preaustinoid A4. The aldo-keto reductase ausK, with the help of ausH, is involved in the next step by transforming preaustinoid A4 into isoaustinone which is in turn hydroxylated by the P450 monooxygenase ausI to form austinolide. The cytochrome P450 monooxygenase ausG then modifies austinolide to austinol. Austinol is further acetylated to austin by the O-acetyltransferase ausP, which spontaneously changes to dehydroaustin. The cytochrome P450 monooxygenase then converts dehydroaustin is into 7-dehydrodehydroaustin. The hydroxylation catalyzed by ausR permits the second O-acetyltransferase ausQ to add an additional acetyl group to the molecule, leading to the formation of acetoxydehydroaustin. Due to genetic rearrangements of the clusters and the subsequent loss of some enzymes, the end product of the Penicillium brasilianum austinoid biosynthesis clusters is acetoxydehydroaustin. In Penicillium brasilianum, this protein is Polyprenyl transferase ausN.